The primary structure comprises 88 residues: Large ribosomal subunit protein bL27 (88 aa).

The tract at residues 1–24 (MAHKKGTGSTRNGRDSNSKRLGVK) is disordered.

It belongs to the bacterial ribosomal protein bL27 family.

The chain is Large ribosomal subunit protein bL27 from Prochlorococcus marinus (strain MIT 9313).